Here is a 514-residue protein sequence, read N- to C-terminus: Leucine-rich repeat-containing protein 14B (514 aa).

The LRR 1; degenerate repeat unit spans residues Arg-104–Thr-141. An LRR 2; degenerate repeat occupies Arg-185 to Gly-209. An LRR 4; degenerate repeat occupies Phe-238–Lys-277. 5 LRR repeats span residues Met-278–Leu-302, Gln-303–Glu-334, Val-335–Thr-350, Ser-359–Pro-386, and Cys-387–Ala-411.

The protein belongs to the PRAME family. LRRC14 subfamily.

In Homo sapiens (Human), this protein is Leucine-rich repeat-containing protein 14B.